Consider the following 812-residue polypeptide: Phospholipase D alpha 1 (812 aa).

Positions Met-1–Gly-46 are excised as a propeptide. In terms of domain architecture, C2 spans Met-1–Leu-130. A Ca(2+)-binding site is contributed by Asp-190. Residues Thr-330 to Arg-368 enclose the PLD phosphodiesterase 1 domain. Active-site residues include His-335, Lys-337, and Asp-342. His-335 contacts a 1,2-diacyl-sn-glycero-3-phosphate. Ca(2+) is bound by residues His-374 and His-408. A 1,2-diacyl-sn-glycero-3-phosphate contacts are provided by Gln-524 and His-663. In terms of domain architecture, PLD phosphodiesterase 2 spans Phe-658 to Ser-685. Active-site residues include His-663, Lys-665, and Asp-670. Position 724 (Glu-724) interacts with Ca(2+).

This sequence belongs to the phospholipase D family. C2-PLD subfamily. As to quaternary structure, monomer. It depends on Ca(2+) as a cofactor. In terms of tissue distribution, expressed in leaves, roots, developing seeds and cultured cells.

The catalysed reaction is a 1,2-diacyl-sn-glycero-3-phosphocholine + H2O = a 1,2-diacyl-sn-glycero-3-phosphate + choline + H(+). In terms of biological role, hydrolyzes glycerol-phospholipids at the terminal phosphodiesteric bond. Plays an important role in various cellular processes. This Oryza sativa subsp. japonica (Rice) protein is Phospholipase D alpha 1 (PLD1).